The following is a 502-amino-acid chain: Putative diacyglycerol O-acyltransferase Rv1760 (502 aa).

Histidine 174 functions as the Proton acceptor in the catalytic mechanism.

It belongs to the long-chain O-acyltransferase family.

It catalyses the reaction an acyl-CoA + a 1,2-diacyl-sn-glycerol = a triacyl-sn-glycerol + CoA. The catalysed reaction is di-(9Z)-octadecenoylglycerol + (9Z)-octadecenoyl-CoA = 1,2,3-tri-(9Z-octadecenoyl)-glycerol + CoA. Its pathway is glycerolipid metabolism; triacylglycerol biosynthesis. In terms of biological role, catalyzes the terminal and only committed step in triacylglycerol synthesis by using diacylglycerol and fatty acyl CoA as substrates. Required for storage lipid synthesis. Its function is as follows. Upon expression in E.coli functions weakly as a triacylglycerol synthase, making triacylglycerol (TG) from diolein and long-chain fatty acyl-CoA. Has very weak wax synthase activity, incorporating palmityl alcohol into wax esters in the presence of palmitoyl-CoA. The sequence is that of Putative diacyglycerol O-acyltransferase Rv1760 from Mycobacterium tuberculosis (strain ATCC 25618 / H37Rv).